The following is a 234-amino-acid chain: Endonuclease V (234 aa).

Aspartate 36 and aspartate 104 together coordinate Mg(2+).

It belongs to the endonuclease V family. Mg(2+) serves as cofactor.

Its subcellular location is the cytoplasm. It carries out the reaction Endonucleolytic cleavage at apurinic or apyrimidinic sites to products with a 5'-phosphate.. DNA repair enzyme involved in the repair of deaminated bases. Selectively cleaves double-stranded DNA at the second phosphodiester bond 3' to a deoxyinosine leaving behind the intact lesion on the nicked DNA. The polypeptide is Endonuclease V (Yersinia pseudotuberculosis serotype O:1b (strain IP 31758)).